The primary structure comprises 297 residues: MRTKSPSSLNLKVIFIGSSILILIIIYLARSNISSSSSKPISKTNLSQEEEETQHKQEGCPTTQQCTKMPLSLSDALVHYVTSNVTPQQTFDEVSVSKRVLDKKSPCNFLVFGLGHDSLMWASLNHGGRTLFIEEDQAWIAIVTKKFPNLESYHVVYDTKVKDSDKLMELGRSEECRSVSDPRNSKCDLALKDFPADFYETKWDLIMVDAPTGYHEEAPGRMSAIYTAGLLARNREDGETDVFVHDVNRPVEDEFSATFLCKGYMREQNGRLRHFTIPSHRARAGRPFCPVEVDRRR.

Residues 9–29 (LNLKVIFIGSSILILIIIYLA) form a helical membrane-spanning segment. The span at 35–47 (SSSSKPISKTNLS) shows a compositional bias: low complexity. The tract at residues 35-63 (SSSSKPISKTNLSQEEEETQHKQEGCPTT) is disordered.

This sequence belongs to the methyltransferase superfamily. In terms of tissue distribution, expressed in hypocotyls, roots, rosette leaves, stems and siliques.

The protein localises to the golgi apparatus membrane. The catalysed reaction is glucuronoxylan D-glucuronate + n S-adenosyl-L-methionine = glucuronoxylan 4-O-methyl-D-glucuronate + n S-adenosyl-L-homocysteine + n H(+). Methyltransferase catalyzing 4-O-methylation of glucuronic acid side chains on xylan. The chain is Glucuronoxylan 4-O-methyltransferase 3 (GXM3) from Arabidopsis thaliana (Mouse-ear cress).